Consider the following 404-residue polypeptide: Formate-dependent phosphoribosylglycinamide formyltransferase (404 aa).

Residues 25–26 and Glu85 each bind N(1)-(5-phospho-beta-D-ribosyl)glycinamide; that span reads EL. ATP-binding positions include Arg118, Lys159, 164-169, 199-202, and Glu207; these read SSGKGQ and EGFV. The ATP-grasp domain occupies 123–318; it reads RLAAEELGLP…EFELHARAIL (196 aa). Residues Glu277 and Glu289 each contribute to the Mg(2+) site. Residues Asp296, Lys365, and 372 to 373 each bind N(1)-(5-phospho-beta-D-ribosyl)glycinamide; that span reads RR.

This sequence belongs to the PurK/PurT family. As to quaternary structure, homodimer.

The catalysed reaction is N(1)-(5-phospho-beta-D-ribosyl)glycinamide + formate + ATP = N(2)-formyl-N(1)-(5-phospho-beta-D-ribosyl)glycinamide + ADP + phosphate + H(+). It participates in purine metabolism; IMP biosynthesis via de novo pathway; N(2)-formyl-N(1)-(5-phospho-D-ribosyl)glycinamide from N(1)-(5-phospho-D-ribosyl)glycinamide (formate route): step 1/1. In terms of biological role, involved in the de novo purine biosynthesis. Catalyzes the transfer of formate to 5-phospho-ribosyl-glycinamide (GAR), producing 5-phospho-ribosyl-N-formylglycinamide (FGAR). Formate is provided by PurU via hydrolysis of 10-formyl-tetrahydrofolate. This Burkholderia cenocepacia (strain HI2424) protein is Formate-dependent phosphoribosylglycinamide formyltransferase.